The primary structure comprises 650 residues: Protein ANTI-SILENCING 1 (650 aa).

One can recognise a BAH domain in the interval 38 to 169 (DEYRLYDCVL…VGSCKVVDTI (132 aa)). Disordered stretches follow at residues 202–223 (NGKSDSLKPNGPLARGASGSVR), 229–248 (AFESSDCKENSNGCKEEKEK), 257–359 (KSTL…QKLD), and 425–448 (VTEKGISKKPSFGRAEDKMSADDN). Composition is skewed to basic and acidic residues over residues 259–270 (TLAEERSNKDSG) and 277–287 (NGKDQESEVKK). Positions 302-315 (SNSFEASGSRTIHS) are enriched in polar residues. 2 stretches are compositionally biased toward basic and acidic residues: residues 348 to 358 (LDDRPLKKQKL) and 438 to 448 (RAEDKMSADDN). The 84-residue stretch at 486-569 (TVVLLQNLDP…RPLVASFAKI (84 aa)) folds into the RRM domain.

Component of the ASI1-AIPP1-EDM2 (AAE) RNA regulatory complex composed of at least AIPP1/EDM3, ASI1 and EDM2 and may contain CPL2, AIPP2 and AIPP3/BDT1. Binds directly to AIPP1/EDM3 and AIPP2.

Collaboratively with AIPP1/EDM3 and EDM2, the AAE complex regulates alternative RNA processing (e.g. alternative splicing) and epigenetic silencing (e.g. H3K9me2) of intronic heterochromatin-containing genes as well as genic heterochromatin-containing genes by promoting distal 3' polyadenylation; may associate with intronic heterochromatin and bind gene transcripts to modulate polyadenylation. Required to prevent promoter DNA hypermethylation and transcriptional silencing of some transgenes. Plays a similar role to that of the histone H3K9 demethylase JMJ25/IBM1 in preventing CHG methylation in the bodies of numerous genes. RNA-binding protein that ensures the proper expression of JMJ25/IBM1 full-length transcript by associating with an intronic heterochromatic repeat element of JMJ25/IBM1. Also modulates transposable elements (TE) expression. Contributes to a unique mechanism to deal with the collateral effect of silencing intronic repeat elements. In Arabidopsis thaliana (Mouse-ear cress), this protein is Protein ANTI-SILENCING 1.